A 167-amino-acid chain; its full sequence is Insertion element IS1 4 protein InsB (167 aa).

Belongs to the transposase 27 family.

Its function is as follows. Absolutely required for transposition of IS1. This chain is Insertion element IS1 4 protein InsB (insB4), found in Escherichia coli (strain K12).